A 436-amino-acid chain; its full sequence is GTPase Der (436 aa).

EngA-type G domains follow at residues 4–167 and 175–351; these read PTIA…PNEY and IKFS…ESQN. GTP-binding positions include 10–17, 57–61, 119–122, 181–188, 229–233, and 294–297; these read GRPNVGKS, DTGGI, NKVD, DTAGM, and NKWD. One can recognise a KH-like domain in the interval 352–436; it reads TRIPSAVLND…PIHLIARKRK (85 aa).

Belongs to the TRAFAC class TrmE-Era-EngA-EngB-Septin-like GTPase superfamily. EngA (Der) GTPase family. In terms of assembly, associates with the 50S ribosomal subunit.

GTPase that plays an essential role in the late steps of ribosome biogenesis. The polypeptide is GTPase Der (Streptococcus pneumoniae (strain JJA)).